The following is a 725-amino-acid chain: Catalase-peroxidase 1 (725 aa).

Residues 96 to 224 constitute a cross-link (tryptophyl-tyrosyl-methioninium (Trp-Tyr) (with M-250)); sequence WHSAGSYRLA…LAAVQMGLIY (129 aa). The active-site Proton acceptor is the His97. The segment at residues 224 to 250 is a cross-link (tryptophyl-tyrosyl-methioninium (Tyr-Met) (with W-96)); it reads YVNPEGVDGNPDPLRTAKDVRETFKRM. His265 is a heme b binding site.

It belongs to the peroxidase family. Peroxidase/catalase subfamily. As to quaternary structure, homodimer or homotetramer. Heme b is required as a cofactor. Formation of the three residue Trp-Tyr-Met cross-link is important for the catalase, but not the peroxidase activity of the enzyme.

It catalyses the reaction H2O2 + AH2 = A + 2 H2O. The catalysed reaction is 2 H2O2 = O2 + 2 H2O. Bifunctional enzyme with both catalase and broad-spectrum peroxidase activity. The chain is Catalase-peroxidase 1 from Idiomarina loihiensis (strain ATCC BAA-735 / DSM 15497 / L2-TR).